A 576-amino-acid chain; its full sequence is Sulfite reductase [NADPH] hemoprotein beta-component (576 aa).

Residues 1 to 12 (MDAKTQPDRSRD) are compositionally biased toward basic and acidic residues. The tract at residues 1 to 26 (MDAKTQPDRSRDVSQPLDKLGPDETL) is disordered. Cysteine 441, cysteine 447, cysteine 486, and cysteine 490 together coordinate [4Fe-4S] cluster. Residue cysteine 490 participates in siroheme binding.

The protein belongs to the nitrite and sulfite reductase 4Fe-4S domain family. Alpha(8)-beta(8). The alpha component is a flavoprotein, the beta component is a hemoprotein. It depends on siroheme as a cofactor. [4Fe-4S] cluster serves as cofactor.

It catalyses the reaction hydrogen sulfide + 3 NADP(+) + 3 H2O = sulfite + 3 NADPH + 4 H(+). Its pathway is sulfur metabolism; hydrogen sulfide biosynthesis; hydrogen sulfide from sulfite (NADPH route): step 1/1. In terms of biological role, component of the sulfite reductase complex that catalyzes the 6-electron reduction of sulfite to sulfide. This is one of several activities required for the biosynthesis of L-cysteine from sulfate. This chain is Sulfite reductase [NADPH] hemoprotein beta-component, found in Nitrobacter winogradskyi (strain ATCC 25391 / DSM 10237 / CIP 104748 / NCIMB 11846 / Nb-255).